A 417-amino-acid polypeptide reads, in one-letter code: NADH-quinone oxidoreductase subunit D (417 aa).

It belongs to the complex I 49 kDa subunit family. In terms of assembly, NDH-1 is composed of 14 different subunits. Subunits NuoB, C, D, E, F, and G constitute the peripheral sector of the complex.

It localises to the cell inner membrane. It carries out the reaction a quinone + NADH + 5 H(+)(in) = a quinol + NAD(+) + 4 H(+)(out). NDH-1 shuttles electrons from NADH, via FMN and iron-sulfur (Fe-S) centers, to quinones in the respiratory chain. The immediate electron acceptor for the enzyme in this species is believed to be ubiquinone. Couples the redox reaction to proton translocation (for every two electrons transferred, four hydrogen ions are translocated across the cytoplasmic membrane), and thus conserves the redox energy in a proton gradient. This chain is NADH-quinone oxidoreductase subunit D, found in Francisella philomiragia subsp. philomiragia (strain ATCC 25017 / CCUG 19701 / FSC 153 / O#319-036).